The sequence spans 556 residues: M-phase inducer phosphatase (556 aa).

2 disordered regions span residues 165-186 (STDGLVPDSPTVLPKDGKQERR) and 257-297 (TSGL…RPRK). Positions 287-297 (KSAHPNMRPRK) are enriched in basic residues. The region spanning 371–474 (MFDNIMIIDC…FFAEHRSLCY (104 aa)) is the Rhodanese domain. Cysteine 421 is a catalytic residue. Polar residues predominate over residues 505 to 516 (RAQTFAFGQQSP). The tract at residues 505-556 (RAQTFAFGQQSPEMEDSPTGRCRNNPGDRKLLASPFNDSPGSRFPGRRMLSY) is disordered.

It belongs to the MPI phosphatase family.

It catalyses the reaction O-phospho-L-tyrosyl-[protein] + H2O = L-tyrosyl-[protein] + phosphate. In terms of biological role, this protein functions as a dosage-dependent inducer in mitotic control. It is a tyrosine protein phosphatase required for progression of the cell cycle. It may directly dephosphorylate p34(cdc2) and activate the p34(cdc2) kinase activity. The protein is M-phase inducer phosphatase (nimT) of Emericella nidulans (strain FGSC A4 / ATCC 38163 / CBS 112.46 / NRRL 194 / M139) (Aspergillus nidulans).